A 484-amino-acid polypeptide reads, in one-letter code: Phosphatidylinositol N-acetylglucosaminyltransferase subunit A (484 aa).

The Cytoplasmic segment spans residues 1-421 (MACRGGAGNG…RLDRLISHCG (421 aa)). Ser21 and Ser24 each carry phosphoserine. The helical transmembrane segment at 422–442 (PVTGYIFALLAVFNFLFLIFL) threads the bilayer. Residues 443-484 (RWMTPDSIIDVAIDATGPRGAWTNNYSHSKRGGENNEISETR) are Lumenal-facing. N-linked (GlcNAc...) asparagine glycosylation occurs at Asn467.

It belongs to the glycosyltransferase group 1 family. Glycosyltransferase 4 subfamily. In terms of assembly, component of the glycosylphosphatidylinositol-N-acetylglucosaminyltransferase (GPI-GnT) complex composed at least by PIGA, PIGC, PIGH, PIGP, PIGQ, PIGY and DPM2. Interacts with PIGC, PIGH, PIGP, PIGQ and DPM2. Interacts directly with PIGY; this interaction regulates glycosylphosphatidylinositol-N-acetylglucosaminyltransferase activity. Interacts with PIGQ.

The protein resides in the endoplasmic reticulum membrane. It carries out the reaction a 1,2-diacyl-sn-glycero-3-phospho-(1D-myo-inositol) + UDP-N-acetyl-alpha-D-glucosamine = a 6-(N-acetyl-alpha-D-glucosaminyl)-1-(1,2-diacyl-sn-glycero-3-phospho)-1D-myo-inositol + UDP + H(+). Its pathway is glycolipid biosynthesis; glycosylphosphatidylinositol-anchor biosynthesis. In terms of biological role, catalytic subunit of the glycosylphosphatidylinositol-N-acetylglucosaminyltransferase (GPI-GnT) complex that catalyzes the transfer of N-acetylglucosamine from UDP-N-acetylglucosamine to phosphatidylinositol and participates in the first step of GPI biosynthesis. The sequence is that of Phosphatidylinositol N-acetylglucosaminyltransferase subunit A from Homo sapiens (Human).